The sequence spans 362 residues: MTKIKLGLLYGGKSAEHQVSLQTALAAIKALNQEKFEIHPIYITEQGQWMRGERIEGEVTSVQALQMSGEANAISPVSLSTEIIPAPASKQEEAIDVIFPLLHGPNGEDGTVQGLLELMNIPYVGNGVLASAAGMDKVVMKNIFAEAGLNQAKYTSFVRSVWEKNREEAYEKVEEALGYPCFVKPANLGSSVGINKCKDREELEKAFEEAFQFDRKIIVEENIIGREVEVGVLGNDDPKCSVVGEIVPKKEFYDYKSKYIDGDTALIIPAEITEEETATIQRDAIRAFQALDGAGLTRADFFLTKDGEVYINEVNTMPGFTPFSMFPLLWQHTGLSYPELIEELIRLAIERHKEKQKIKYTI.

The ATP-grasp domain occupies 141-346 (KNIFAEAGLN…YPELIEELIR (206 aa)). Position 174 to 229 (174 to 229 (EEALGYPCFVKPANLGSSVGINKCKDREELEKAFEEAFQFDRKIIVEENIIGREVE)) interacts with ATP. Asp300, Glu313, and Asn315 together coordinate Mg(2+).

This sequence belongs to the D-alanine--D-alanine ligase family. It depends on Mg(2+) as a cofactor. Mn(2+) is required as a cofactor.

It localises to the cytoplasm. The catalysed reaction is 2 D-alanine + ATP = D-alanyl-D-alanine + ADP + phosphate + H(+). It functions in the pathway cell wall biogenesis; peptidoglycan biosynthesis. Cell wall formation. This Bacillus cytotoxicus (strain DSM 22905 / CIP 110041 / 391-98 / NVH 391-98) protein is D-alanine--D-alanine ligase.